Reading from the N-terminus, the 89-residue chain is Small ribosomal subunit protein uS15 (89 aa).

The protein belongs to the universal ribosomal protein uS15 family. In terms of assembly, part of the 30S ribosomal subunit. Forms a bridge to the 50S subunit in the 70S ribosome, contacting the 23S rRNA.

Its function is as follows. One of the primary rRNA binding proteins, it binds directly to 16S rRNA where it helps nucleate assembly of the platform of the 30S subunit by binding and bridging several RNA helices of the 16S rRNA. In terms of biological role, forms an intersubunit bridge (bridge B4) with the 23S rRNA of the 50S subunit in the ribosome. This Micrococcus luteus (strain ATCC 4698 / DSM 20030 / JCM 1464 / CCM 169 / CCUG 5858 / IAM 1056 / NBRC 3333 / NCIMB 9278 / NCTC 2665 / VKM Ac-2230) (Micrococcus lysodeikticus) protein is Small ribosomal subunit protein uS15.